Here is a 640-residue protein sequence, read N- to C-terminus: Pleckstrin homology-like domain family B member 3 (640 aa).

5 disordered regions span residues 1-100, 162-189, 241-262, 387-412, and 476-504; these read MGTR…AARR, LEQQ…ERDR, LERE…VPDP, GLQR…RPLS, and REGT…PHPP. Residues 76-90 are compositionally biased toward low complexity; the sequence is PPIAMAATPPASTSS. Positions 104 to 327 form a coiled coil; it reads QQLEALTRVA…ERSRLLELNC (224 aa). A compositionally biased stretch (basic and acidic residues) spans 170 to 189; the sequence is QRGRQQREQEQRRLSQERDR. A coiled-coil region spans residues 454–481; it reads DIAHMERLLQQAMAERERLLKAREGTRR. Residues 495–504 show a composition bias toward pro residues; the sequence is TAPPTPPHPP. The PH domain occupies 532–635; sequence GCCCRGPLVK…WMDVIVTAAD (104 aa).

In Homo sapiens (Human), this protein is Pleckstrin homology-like domain family B member 3 (PHLDB3).